A 484-amino-acid polypeptide reads, in one-letter code: Cytochrome P450 monooxygenase poxD (484 aa).

The helical transmembrane segment at Val-2–Ser-24 threads the bilayer. Residue Cys-429 coordinates heme.

The protein belongs to the cytochrome P450 family. The cofactor is heme.

The protein localises to the membrane. It participates in secondary metabolite biosynthesis. Its function is as follows. Cytochrome P450 monooxygenase; part of the gene cluster that mediates the biosynthesis of oxaleimides, cytotoxic compounds containing an unusual disubstituted succinimide moiety. The first step of the pathway is provided by the HR-PKS poxF that serves in a new mode of collaborative biosynthesis with the PKS-NRPS poxE, by providing the olefin containing amino acid substrate via the synthesis of an ACP-bound dec-4-enoate. The cytochrome P450 monooxygenase poxM-catalyzed oxidation at the alpha-position creates the enzyme-bound 2-hydroxydec-4-enoyl-ACP thioester, which may be prone to spontaneous hydrolysis to yield 2-hydroxydec-4-enoic acid due to increased electrophilicity of the carbonyl. 2-hydroxydec-4-enoic acid can then be further oxidized by poxM to yield the alpha-ketoacid 2-oxodec-4-enoicacid, which is reductively aminated by the aminotransferase poxL to yield (S,E)-2-aminodec-4-enoic acid. The Hybrid PKS-NRPS synthetase poxE then performs condensation between the octaketide product of its PKS modules and the amino group of (S,E)-2-aminodec-4-enoic acid which is activated and incorporated by the adenylation domain. The resulting aminoacyl product can be cyclized by the Diels-Alderase PoxQ and reductively released by the reductive (R) domain of poxE to yield an aldehyde intermediate. The released aldehyde is then substrate for a Knoevenagel condensation by the hydrolyase poxO followed by an oxidation at the 5-position of the pyrrolidone ring. The presence of the olefin from the amino acid building block allows for migration of the substituted allyl group to occur. This allylic transposition reaction takes place in a conjugate addition, semipinacol-like fashion to yield a succinimide intermediate. Iterative two-electron oxidations of the C7 methyl of the succinimide intermediate to the carboxylic acid can be catalyzed by one of two remaining cytochrome P450 monooxygenasess poxC or poxD to yield oxaleimide A. Subsequent oxidation yields the maleimide scaffold oxaleimide I. Both oxaleimide A and oxaleimide I can undergo oxidative modifications in the decalin ring to yield the series of products oxaleimides B to H. This Penicillium oxalicum protein is Cytochrome P450 monooxygenase poxD.